Here is a 157-residue protein sequence, read N- to C-terminus: Anaerobic nitrite reductase Hb1 (157 aa).

Residues Gly5 to Lys154 form the Globin domain. A Homodimerization motif is present at residues Glu38 to Ala42. Residues Ser48, Lys62, His66, Arg96, Thr100, and His101 each coordinate heme b. Residues Ala108–Glu120 carry the Homodimerization motif.

The protein belongs to the plant globin family. Homodimer. Heme b is required as a cofactor. In terms of tissue distribution, predominantly expressed in leaves, to a lower extent in roots, and barely in stems, flowers and seeds.

It is found in the cytoplasm. The protein resides in the nucleus. It carries out the reaction Fe(III)-heme b-[protein] + nitric oxide + H2O = Fe(II)-heme b-[protein] + nitrite + 2 H(+). Phytoglobin that reduces nitrite to nitric oxide (NO) under anoxic conditions (e.g. during flooding or in waterlogged soil) and upon root nodulation. Required for general plant development and during nodulation, especially for the onset of symbiosis. Monitors nitric oxide (NO) levels during early phase of the nitrogen-fixing symbiosis and buffers oxygen in functioning nodules. May not function as an oxygen storage or transport protein. Has an unusually high affinity for O(2) through a hexacoordinate heme iron because of a very low dissociation constant. Involved in water stress tolerance. This Glycine max (Soybean) protein is Anaerobic nitrite reductase Hb1.